A 146-amino-acid polypeptide reads, in one-letter code: Hemoglobin subunit beta (146 aa).

The Globin domain maps to 2-146 (HWTAEEKQLI…VAHALARKYH (145 aa)). Residues His63 and His92 each contribute to the heme b site.

It belongs to the globin family. As to quaternary structure, heterotetramer of two alpha chains and two beta chains. Red blood cells.

In terms of biological role, involved in oxygen transport from the lung to the various peripheral tissues. This Aegypius monachus (Cinereous vulture) protein is Hemoglobin subunit beta (HBB).